The following is a 1064-amino-acid chain: MARAMSETAEPGARTGAADTTVAPTGASGGIIPAAAGTAGGAPAGTGSVEPSFRYDARLAADIERRWQRRWADEGTFNSPNPVGPLSTGFEKVAGREPFYIMDMFPYPSGSGLHVGHPLGYIGTDVFARYLRMSGRHVLHPFGYDSFGLPAEQYAINTGQHPRDTTNANIANMRRQLSRLGLGHDTRREIATTDVGYYRWTQWIFQQIFNSWYDPQAGRARPIAELIEEFAAGTRAPVAGPAGGNTAVSVDAVRAANPAGLAWTELDEVSRRKVVNAHRLAYISEQLVNWCPGLGTVLANEEVTADGRSDIGNYPVFRRPLKQWILRITAYAERLISDLDLVDWPDSIKQMQRNWISPSEGASVEFTVVAPGEEAGASDPSGSSTARRIEVYTTRPDTLAGATFLVLAPEHPLADALIADTWPADTPVSWRFPAGRPGGGTEPADTAGPEAGADPAWTPRAAVDAYREFAAHRSDRQRGEEVIDRTGVFTGSYVRNPVGGGVIPVFLADYVLLGYGTGAIMAVPAHDSRDFSFARAFDLPIPAVLEPDADWYAAHGVVPATPSAQWPEAFSGAGEYRPGPASAPVLVGLSKSEAIKATVHWLEEIGAGRSARSYRLRDWLFSRQRYWGEPFPIVFDVDGLPHAVPDELLPIELPEMTDFRPTAMAEDDASDPVPPLARVADWVTVTLDLGDGPKQYRRETNTMPQWAGSCWYYLRYLDPTNTERFVDPTVERYWMARPGAVPGDGGVDLYVGGVEHAVLHLLYARFWHKVLYDLGHVSTKEPFKRLFNQGYIQADAFTDARGMYVPAAEVTATPDGRFLFQGAPVNRRSGKMGKSLKNSVSPDEMYDRFGADTLRVYEMAMGPLDADRPWHTDDIVGSHRFLQRLWRTVVDETTGAAAVVDEPLDDEALRVLHRTILTVTAEYAGLRFNTAVARLIELTNFVSKSYGKSPTPRALAEPLTLMAAPLAPHIAEELWSRLGHEESVSTVAFPIGDPALAAESVRTIPVQVNGKVRFTIEVPDGSAEQTVRDLLAAHPEFARQTDGRTIKKIIVVPGRIVNIAISPA.

The interval 1 to 25 (MARAMSETAEPGARTGAADTTVAPT) is disordered. The short motif at 106–117 (PYPSGSGLHVGH) is the 'HIGH' region element. A disordered region spans residues 435–456 (GRPGGGTEPADTAGPEAGADPA). A 'KMSKS' region motif is present at residues 831 to 835 (KMGKS). Lysine 834 provides a ligand contact to ATP.

It belongs to the class-I aminoacyl-tRNA synthetase family.

The protein localises to the cytoplasm. The enzyme catalyses tRNA(Leu) + L-leucine + ATP = L-leucyl-tRNA(Leu) + AMP + diphosphate. The sequence is that of Leucine--tRNA ligase from Frankia casuarinae (strain DSM 45818 / CECT 9043 / HFP020203 / CcI3).